The following is a 160-amino-acid chain: Cytochrome b6-f complex subunit 4 (160 aa).

Helical transmembrane passes span 36 to 56 (LLYI…GLAV), 95 to 115 (LLGI…PFIE), and 131 to 151 (AVFL…TLPI).

Belongs to the cytochrome b family. PetD subfamily. The 4 large subunits of the cytochrome b6-f complex are cytochrome b6, subunit IV (17 kDa polypeptide, PetD), cytochrome f and the Rieske protein, while the 4 small subunits are PetG, PetL, PetM and PetN. The complex functions as a dimer.

It localises to the cellular thylakoid membrane. Component of the cytochrome b6-f complex, which mediates electron transfer between photosystem II (PSII) and photosystem I (PSI), cyclic electron flow around PSI, and state transitions. The polypeptide is Cytochrome b6-f complex subunit 4 (Trichodesmium erythraeum (strain IMS101)).